We begin with the raw amino-acid sequence, 234 residues long: Ribosome maturation protein SDO1 homolog (234 aa).

The protein belongs to the SDO1/SBDS family.

This is Ribosome maturation protein SDO1 homolog from Archaeoglobus fulgidus (strain ATCC 49558 / DSM 4304 / JCM 9628 / NBRC 100126 / VC-16).